Reading from the N-terminus, the 819-residue chain is Ion-translocating oxidoreductase complex subunit C (819 aa).

2 consecutive 4Fe-4S ferredoxin-type domains span residues 368 to 398 (EYAE…QQLY) and 408 to 437 (KSEE…IQYF). [4Fe-4S] cluster-binding residues include cysteine 378, cysteine 381, cysteine 384, cysteine 388, cysteine 417, cysteine 420, cysteine 423, and cysteine 427. 2 stretches are compositionally biased toward basic and acidic residues: residues 465–477 (QARM…ERKA) and 485–513 (ARRE…KANE). 3 disordered regions span residues 465–568 (QARM…NAKK), 580–677 (AKKL…TALD), and 692–793 (AKKL…PKKA). Composition is skewed to polar residues over residues 554–565 (VENQEQQTQPTN) and 587–601 (NSTS…TAEN). A compositionally biased stretch (basic and acidic residues) spans 602 to 614 (QVEKTKSAVEKTQ). The span at 641-656 (QTNSTSEAISNSQTAE) shows a compositional bias: polar residues. Residues 658–671 (EVEKTKSAVEKTEE) show a composition bias toward basic and acidic residues. Polar residues-rich tracts occupy residues 699–712 (NSAS…QTAE) and 755–768 (NSTS…QTAE). The span at 770–782 (EVEKTKSAVEKTQ) shows a compositional bias: basic and acidic residues.

The protein belongs to the 4Fe4S bacterial-type ferredoxin family. RnfC subfamily. As to quaternary structure, the complex is composed of six subunits: RnfA, RnfB, RnfC, RnfD, RnfE and RnfG. [4Fe-4S] cluster serves as cofactor.

The protein localises to the cell inner membrane. Its function is as follows. Part of a membrane-bound complex that couples electron transfer with translocation of ions across the membrane. This Haemophilus influenzae (strain ATCC 51907 / DSM 11121 / KW20 / Rd) protein is Ion-translocating oxidoreductase complex subunit C.